Consider the following 107-residue polypeptide: Death-associated protein-like 1 (107 aa).

A disordered region spans residues 1 to 26 (MANEVQVQLSPLKGGHPPAVKAGGKR).

Detected in the corneal epithelium, and only in trace amounts in the liver, bladder, brain, heart, and stomach.

May play a role in the early stages of epithelial differentiation or in apoptosis. The chain is Death-associated protein-like 1 (DAPL1) from Bos taurus (Bovine).